The sequence spans 366 residues: Transcription factor bHLH74 (366 aa).

The span at 1–11 shows a compositional bias: gly residues; sequence MGGESNEGGEM. Disordered stretches follow at residues 1-20 and 123-201; these read MGGE…DDES and GESS…APKE. Basic and acidic residues-rich tracts occupy residues 123 to 134 and 159 to 170; these read GESSHEDHHQVS and KAVEEFQEDPQR. Positions 212–262 constitute a bHLH domain; the sequence is QATNSHSLAERVRREKISERMRLLQELVPGCNKITGKAVMLDEIINYVQSL.

In terms of assembly, homodimer. Interacts with IBH1. Binds reversibly to CRY2 after blue light illumination. Expressed constitutively in roots, leaves, stems, and flowers.

It localises to the nucleus. Functionally, transcriptional activator involved in cell elongation. Regulates the expression of a subset of genes involved in cell expansion by binding to the G-box motif. Binds to chromatin DNA of the FT gene and promotes its expression, and thus triggers flowering in response to blue light. This is Transcription factor bHLH74 (BHLH74) from Arabidopsis thaliana (Mouse-ear cress).